Reading from the N-terminus, the 348-residue chain is EGF-like domain-containing protein 1 (348 aa).

The signal sequence occupies residues 1–19; it reads MFYLSTFMTIVISLSLVSC. Residues 60 to 92 form the EGF-like domain; that stretch reads TGSNCTVTCQNNGKCYDGSKCLCSSDYTGDLCE. 3 disulfide bridges follow: cysteine 64–cysteine 74, cysteine 68–cysteine 80, and cysteine 82–cysteine 91. Residues 99–342 form the ZP domain; sequence RCTLDAVVFE…PTCAAPXVGQ (244 aa).

In terms of tissue distribution, prismatic layer of shell (at protein level). Expressed primarily in the mantle with highest level in the mantle edge and lower level in the mantle pallium.

It is found in the secreted. In Pinctada maxima (Silver-lipped pearl oyster), this protein is EGF-like domain-containing protein 1.